The chain runs to 283 residues: Isochorismatase domain-containing protein 1 (283 aa).

This sequence belongs to the isochorismatase family.

This Salmo salar (Atlantic salmon) protein is Isochorismatase domain-containing protein 1 (isoc1).